A 364-amino-acid polypeptide reads, in one-letter code: Oxidized polyvinyl alcohol hydrolase (364 aa).

An N-terminal signal peptide occupies residues 1–34; the sequence is MFKPVVKSRSSRSFCYLAGCLAMVAATLSSTAQA. Catalysis depends on charge relay system residues Ser190 and Ser293.

This sequence belongs to the peptidase S9A family. As to quaternary structure, monomer.

It localises to the periplasm. The enzyme catalyses nonane-4,6-dione + H2O = pentan-2-one + butanoate + H(+). Functionally, catalyzes the hydrolysis of 4,6-nonanedione, a beta-diketone compound. Also mediates hydrolysis of oxidized polyvinyl alcohol (PVA) in the second step in the degradation of polyvinyl alcohol. Not active toward the monoketone structure. The polypeptide is Oxidized polyvinyl alcohol hydrolase (oph) (Sphingopyxis sp. (strain 113P3)).